The sequence spans 875 residues: Probable dipeptidyl-aminopeptidase B (875 aa).

The tract at residues 1–90 (MSEPKPIQDT…ASSETTPPRK (90 aa)) is disordered. Over 1–98 (MSEPKPIQDT…RKGVDRKLKK (98 aa)) the chain is Cytoplasmic. Residues 19-28 (SSISSASTTS) show a composition bias toward low complexity. A compositionally biased stretch (basic and acidic residues) spans 33 to 46 (RLAEESEKNHDASS). Residues 99–119 (VLLIVGGFFVAAWIVSLVVFL) form a helical; Signal-anchor for type II membrane protein membrane-spanning segment. Topologically, residues 120-875 (TNKSYKHGSQ…VNDAKPKIES (756 aa)) are vacuolar. N354 and N567 each carry an N-linked (GlcNAc...) asparagine glycan. A disordered region spans residues 689-715 (VDFQSSDGGRRTTRSPRRATGRPSATS). Residues 699–708 (RTTRSPRRAT) show a composition bias toward basic residues. S726 functions as the Charge relay system in the catalytic mechanism. The N-linked (GlcNAc...) asparagine glycan is linked to N785. Residues D803 and H836 each act as charge relay system in the active site.

Belongs to the peptidase S9B family.

It is found in the vacuole membrane. The catalysed reaction is Release of an N-terminal dipeptide, Xaa-Yaa-|-Zaa-, from a polypeptide, preferentially when Yaa is Pro, provided Zaa is neither Pro nor hydroxyproline.. In terms of biological role, type IV dipeptidyl-peptidase which removes N-terminal dipeptides sequentially from polypeptides having unsubstituted N-termini provided that the penultimate residue is proline. This Verticillium alfalfae (strain VaMs.102 / ATCC MYA-4576 / FGSC 10136) (Verticillium wilt of alfalfa) protein is Probable dipeptidyl-aminopeptidase B (DAPB).